The primary structure comprises 219 residues: Guanylate kinase (219 aa).

The Guanylate kinase-like domain occupies 15–194; that stretch reads GLMFVLSSPS…AFAEVQSILK (180 aa). 22-29 lines the ATP pocket; the sequence is SPSGAGKT.

Belongs to the guanylate kinase family.

The protein localises to the cytoplasm. The catalysed reaction is GMP + ATP = GDP + ADP. Functionally, essential for recycling GMP and indirectly, cGMP. The chain is Guanylate kinase from Nitrobacter hamburgensis (strain DSM 10229 / NCIMB 13809 / X14).